The chain runs to 117 residues: Ribosome-binding factor A (117 aa).

This sequence belongs to the RbfA family. Monomer. Binds 30S ribosomal subunits, but not 50S ribosomal subunits or 70S ribosomes.

The protein localises to the cytoplasm. One of several proteins that assist in the late maturation steps of the functional core of the 30S ribosomal subunit. Associates with free 30S ribosomal subunits (but not with 30S subunits that are part of 70S ribosomes or polysomes). Required for efficient processing of 16S rRNA. May interact with the 5'-terminal helix region of 16S rRNA. This is Ribosome-binding factor A from Leptospira borgpetersenii serovar Hardjo-bovis (strain JB197).